We begin with the raw amino-acid sequence, 123 residues long: Late histone H2B.L1 (123 aa).

Over residues 1-10 (MPAKAQPAGK) the composition is skewed to low complexity. Residues 1-33 (MPAKAQPAGKKGSKKAKAPRPSGGKKRRRRRKE) form a disordered region. A compositionally biased stretch (basic residues) spans 11–32 (KGSKKAKAPRPSGGKKRRRRRK). O-linked (GlcNAc) serine glycosylation is present at Ser110. Residue Lys118 forms a Glycyl lysine isopeptide (Lys-Gly) (interchain with G-Cter in ubiquitin) linkage.

This sequence belongs to the histone H2B family. In terms of assembly, the nucleosome is a histone octamer containing two molecules each of H2A, H2B, H3 and H4 assembled in one H3-H4 heterotetramer and two H2A-H2B heterodimers. The octamer wraps approximately 147 bp of DNA. Post-translationally, monoubiquitination of Lys-118 gives a specific tag for epigenetic transcriptional activation and is also prerequisite for histone H3 'Lys-4' and 'Lys-79' methylation. In terms of processing, glcNAcylation at Ser-110 promotes monoubiquitination of Lys-118. It fluctuates in response to extracellular glucose, and associates with transcribed genes.

The protein localises to the nucleus. It is found in the chromosome. Its function is as follows. Core component of nucleosome. Nucleosomes wrap and compact DNA into chromatin, limiting DNA accessibility to the cellular machineries which require DNA as a template. Histones thereby play a central role in transcription regulation, DNA repair, DNA replication and chromosomal stability. DNA accessibility is regulated via a complex set of post-translational modifications of histones, also called histone code, and nucleosome remodeling. This is Late histone H2B.L1 from Strongylocentrotus purpuratus (Purple sea urchin).